The sequence spans 253 residues: rRNA adenine N-6-methyltransferase (253 aa).

S-adenosyl-L-methionine is bound by residues N14, L16, G40, E61, D85, and N101. Residues 229–253 form a disordered region; sequence CAREESTPRPYLPDCTPTTGSISSR. Positions 244–253 are enriched in polar residues; it reads TPTTGSISSR.

This sequence belongs to the class I-like SAM-binding methyltransferase superfamily. rRNA adenine N(6)-methyltransferase family.

Its function is as follows. Involved in erythromycin resistance. The protein is rRNA adenine N-6-methyltransferase (ermA) of Corynebacterium diphtheriae.